We begin with the raw amino-acid sequence, 883 residues long: Alanine--tRNA ligase (883 aa).

Zn(2+) is bound by residues His-570, His-574, Cys-672, and His-676.

This sequence belongs to the class-II aminoacyl-tRNA synthetase family. Zn(2+) serves as cofactor.

It localises to the cytoplasm. It catalyses the reaction tRNA(Ala) + L-alanine + ATP = L-alanyl-tRNA(Ala) + AMP + diphosphate. Functionally, catalyzes the attachment of alanine to tRNA(Ala) in a two-step reaction: alanine is first activated by ATP to form Ala-AMP and then transferred to the acceptor end of tRNA(Ala). Also edits incorrectly charged Ser-tRNA(Ala) and Gly-tRNA(Ala) via its editing domain. The polypeptide is Alanine--tRNA ligase (Heliobacterium modesticaldum (strain ATCC 51547 / Ice1)).